We begin with the raw amino-acid sequence, 216 residues long: Early E3 25 kDa glycoprotein (216 aa).

N-linked (GlcNAc...) asparagine; by host glycans are attached at residues asparagine 25, asparagine 82, asparagine 97, asparagine 109, asparagine 142, asparagine 147, and asparagine 160.

This chain is Early E3 25 kDa glycoprotein, found in Canis lupus familiaris (Dog).